Reading from the N-terminus, the 409-residue chain is Sprouty-related, EVH1 domain-containing protein 2 (409 aa).

In terms of domain architecture, WH1 spans Ala5–Leu121. The tract at residues Leu121–Pro170 is disordered. A compositionally biased stretch (polar residues) spans Glu123 to His133. Low complexity predominate over residues Thr146–Ser155. Residues Pro199–Ser253 form the KBD domain. The SPR domain maps to Arg299–Ala407.

It localises to the cell membrane. The protein resides in the cytoplasmic vesicle. The protein localises to the secretory vesicle membrane. It is found in the cytoplasm. Negatively regulates Ras signaling pathways and downstream activation of MAP kinases. This chain is Sprouty-related, EVH1 domain-containing protein 2 (spred2), found in Xenopus tropicalis (Western clawed frog).